The chain runs to 103 residues: Large ribosomal subunit protein bL21 (103 aa).

It belongs to the bacterial ribosomal protein bL21 family. Part of the 50S ribosomal subunit. Contacts protein L20.

In terms of biological role, this protein binds to 23S rRNA in the presence of protein L20. The polypeptide is Large ribosomal subunit protein bL21 (Pseudomonas paraeruginosa (strain DSM 24068 / PA7) (Pseudomonas aeruginosa (strain PA7))).